A 745-amino-acid polypeptide reads, in one-letter code: Polyribonucleotide nucleotidyltransferase (745 aa).

Positions 487 and 493 each coordinate Mg(2+). In terms of domain architecture, KH spans 554–613 (PSTTTIKIDKDKIRDIIGPGGKVIKEICEISGAKIDISDDGTVSIYASDRDKLKVALDKI). The region spanning 623 to 691 (GEIFNGTVMK…NKGKAKLTIK (69 aa)) is the S1 motif domain. The disordered stretch occupies residues 691-745 (KNADKDKSSNNTKPKTNAKDNSEPEQRRDSSKKRAWNEDNNAETAEVITERKYFN). Positions 707-719 (NAKDNSEPEQRRD) are enriched in basic and acidic residues.

This sequence belongs to the polyribonucleotide nucleotidyltransferase family. Requires Mg(2+) as cofactor.

It is found in the cytoplasm. The enzyme catalyses RNA(n+1) + phosphate = RNA(n) + a ribonucleoside 5'-diphosphate. Its function is as follows. Involved in mRNA degradation. Catalyzes the phosphorolysis of single-stranded polyribonucleotides processively in the 3'- to 5'-direction. This chain is Polyribonucleotide nucleotidyltransferase, found in Rickettsia massiliae (strain Mtu5).